The following is a 62-amino-acid chain: Photosystem II reaction center protein Z (62 aa).

2 helical membrane passes run 8–28 and 41–61; these read TVLA…VIFA and FSGA…NSFV.

Belongs to the PsbZ family. In terms of assembly, PSII is composed of 1 copy each of membrane proteins PsbA, PsbB, PsbC, PsbD, PsbE, PsbF, PsbH, PsbI, PsbJ, PsbK, PsbL, PsbM, PsbT, PsbY, PsbZ, Psb30/Ycf12, at least 3 peripheral proteins of the oxygen-evolving complex and a large number of cofactors. It forms dimeric complexes.

It is found in the plastid. It localises to the chloroplast thylakoid membrane. May control the interaction of photosystem II (PSII) cores with the light-harvesting antenna, regulates electron flow through the 2 photosystem reaction centers. PSII is a light-driven water plastoquinone oxidoreductase, using light energy to abstract electrons from H(2)O, generating a proton gradient subsequently used for ATP formation. In Mesostigma viride (Green alga), this protein is Photosystem II reaction center protein Z.